The chain runs to 659 residues: WD repeat-containing protein 48 homolog (659 aa).

8 WD repeats span residues 27–66 (RHRN…SQEP), 73–112 (HHND…CMST), 115–154 (THRD…ALTA), 166–205 (GSKD…KIAK), 208–247 (GHAE…CVQT), 250–289 (VHSE…NSVL), 292–331 (EERA…KLSF), and 337–376 (KGGA…KVED). A disordered region spans residues 592–613 (ASTGNSNSSQNNSQSDANSEGS). The span at 596-610 (NSNSSQNNSQSDANS) shows a compositional bias: low complexity.

It belongs to the WD repeat WDR48 family. In terms of assembly, catalytic component of the Usp12-46 deubiquitylase complex consisting of Usp12-46, Wdr20 and Uaf1; regulatory subunit that, together wtih Wdr20, stabilizes Usp12-46. The Usp12-46 deubiquitylase complex associates with arr/arrow; the interaction leads to deubiquitination and stabilization of arr/arrow.

Regulatory component of the Usp12-46 deubiquitylase complex. activates deubiquitination by increasing the catalytic turnover without increasing the affinity of deubiquitinating enzymes for the substrate. The complex deubiquitylates the wg/wingless-signaling receptor arr/arrow, which stabilizes the receptor and increases its concentration at the cell surface; this enhances the sensitivity of cells to wg/wingless-signal stimulation. This increases the amplitude and spatial range of the signaling response to the wg/wingless morphogen gradient, facilitating the precise concentration-dependent regulation of its target genes. Together with Wdr20 and Usp12-46 required for wg/wingless-mediated signaling in the wing imaginal disc and for wg/wingless-dependent regulation of intestinal stem cell proliferation. In Aedes aegypti (Yellowfever mosquito), this protein is WD repeat-containing protein 48 homolog.